An 825-amino-acid polypeptide reads, in one-letter code: Zinc finger protein 229 (825 aa).

The disordered stretch occupies residues 1–26 (METLTSRHEKRALHSQASAISQDREE). Positions 34–108 (LSFKDVAVVF…SHKELSSCKI (75 aa)) constitute a KRAB domain. A C2H2-type 1; degenerate zinc finger spans residues 291–315 (KLCQYDEFSEGLRHSAHLNRHQRVP). 7 C2H2-type zinc fingers span residues 349–371 (YRCD…QGVH), 377–399 (YKCE…QRVH), 405–427 (YKCS…QRLH), 433–455 (YTCS…QHIH), 461–483 (YSCG…QKTH), 489–511 (YQCD…QRVH), and 517–539 (YKCN…QRLH). Residue lysine 543 forms a Glycyl lysine isopeptide (Lys-Gly) (interchain with G-Cter in SUMO2) linkage. C2H2-type zinc fingers lie at residues 545–566 (YKCE…QRVH), 572–594 (YKCS…QRVH), 600–622 (YVCD…QRVH), 628–650 (YKCA…QRVH), 656–678 (YRCQ…QRVH), 684–706 (YTCD…QRLH), 712–734 (YTCC…KRVH), 740–762 (YRCH…QRVH), 768–790 (YKCE…QRVH), and 796–818 (YTCG…QRVH).

The protein belongs to the krueppel C2H2-type zinc-finger protein family.

It localises to the nucleus. May be involved in transcriptional regulation. This is Zinc finger protein 229 from Homo sapiens (Human).